The chain runs to 475 residues: Sensor histidine kinase GlrK (475 aa).

Residues 1–13 (MKRWPVFPRSLRQ) are Cytoplasmic-facing. The helical transmembrane segment at 14 to 34 (LVMLAFLLILLPLLVLAWQAW) threads the bilayer. The Periplasmic segment spans residues 35 to 173 (QSLNALSDQA…LQREIAERGQ (139 aa)). The helical transmembrane segment at 174-194 (YFGWQSLVLFLVSLVMVLLFT) threads the bilayer. At 195–475 (RMIIGPVKNI…IELPSSKNTK (281 aa)) the chain is on the cytoplasmic side. Residues 256-472 (HLSHELKTPL…CFRIELPSSK (217 aa)) enclose the Histidine kinase domain. H259 is subject to Phosphohistidine; by autocatalysis.

In terms of processing, autophosphorylated.

It localises to the cell inner membrane. The catalysed reaction is ATP + protein L-histidine = ADP + protein N-phospho-L-histidine.. Member of the two-component regulatory system GlrR/GlrK that up-regulates transcription of the glmY sRNA when cells enter the stationary growth phase. Activates GlrR by phosphorylation. In Escherichia coli (strain K12), this protein is Sensor histidine kinase GlrK (glrK).